A 329-amino-acid chain; its full sequence is GTPase Obg (329 aa).

An Obg domain is found at 1–159; sequence MQFIDQARIT…WPLQLELKLL (159 aa). The OBG-type G domain occupies 160–328; the sequence is AEVGIIGLPN…LLDQVWQLLG (169 aa). ATP-binding positions include 166–173, 191–195, 213–216, 280–283, and 309–311; these read GLPNAGKS, FTTLV, DIPG, NKLE, and SAV. The Mg(2+) site is built by S173 and T193.

This sequence belongs to the TRAFAC class OBG-HflX-like GTPase superfamily. OBG GTPase family. Monomer. Requires Mg(2+) as cofactor.

Its subcellular location is the cytoplasm. An essential GTPase which binds GTP, GDP and possibly (p)ppGpp with moderate affinity, with high nucleotide exchange rates and a fairly low GTP hydrolysis rate. Plays a role in control of the cell cycle, stress response, ribosome biogenesis and in those bacteria that undergo differentiation, in morphogenesis control. This Synechococcus sp. (strain WH7803) protein is GTPase Obg.